Reading from the N-terminus, the 60-residue chain is uncharacterized protein (60 aa).

This is an uncharacterized protein from Homo sapiens (Human).